Here is a 454-residue protein sequence, read N- to C-terminus: Ribosomal protein uS12 methylthiotransferase RimO (454 aa).

Residues 14–125 (SKVAFSHVGC…IAKVLDRVEQ (112 aa)) form the MTTase N-terminal domain. [4Fe-4S] cluster-binding residues include C23, C59, C88, C163, C167, and C170. Residues 149 to 378 (DKNKFVAYLR…ISVQQNISKD (230 aa)) enclose the Radical SAM core domain. The region spanning 381-452 (QTYVGSKMKI…EYDLYGEIIK (72 aa)) is the TRAM domain.

The protein belongs to the methylthiotransferase family. RimO subfamily. The cofactor is [4Fe-4S] cluster.

The protein localises to the cytoplasm. It catalyses the reaction L-aspartate(89)-[ribosomal protein uS12]-hydrogen + (sulfur carrier)-SH + AH2 + 2 S-adenosyl-L-methionine = 3-methylsulfanyl-L-aspartate(89)-[ribosomal protein uS12]-hydrogen + (sulfur carrier)-H + 5'-deoxyadenosine + L-methionine + A + S-adenosyl-L-homocysteine + 2 H(+). Catalyzes the methylthiolation of an aspartic acid residue of ribosomal protein uS12. This is Ribosomal protein uS12 methylthiotransferase RimO from Prochlorococcus marinus (strain AS9601).